A 323-amino-acid polypeptide reads, in one-letter code: ADP-L-glycero-D-manno-heptose-6-epimerase (323 aa).

Residues Phe10–Ile11, Asp31–Asn32, Lys38, Arg53, Met75–Ser79, and Asn92 each bind NADP(+). The active-site Proton acceptor is the Tyr143. NADP(+) is bound at residue Lys147. Asn170 contacts substrate. NADP(+) contacts are provided by Val171 and Lys179. Residue Lys179 is the Proton acceptor of the active site. Substrate contacts are provided by residues Asp181, Lys188, Phe202–Cys205, Arg216, and Tyr281.

The protein belongs to the NAD(P)-dependent epimerase/dehydratase family. HldD subfamily. In terms of assembly, homopentamer. NADP(+) is required as a cofactor.

The enzyme catalyses ADP-D-glycero-beta-D-manno-heptose = ADP-L-glycero-beta-D-manno-heptose. The protein operates within nucleotide-sugar biosynthesis; ADP-L-glycero-beta-D-manno-heptose biosynthesis; ADP-L-glycero-beta-D-manno-heptose from D-glycero-beta-D-manno-heptose 7-phosphate: step 4/4. Catalyzes the interconversion between ADP-D-glycero-beta-D-manno-heptose and ADP-L-glycero-beta-D-manno-heptose via an epimerization at carbon 6 of the heptose. This is ADP-L-glycero-D-manno-heptose-6-epimerase from Nitratidesulfovibrio vulgaris (strain DP4) (Desulfovibrio vulgaris).